Here is a 199-residue protein sequence, read N- to C-terminus: Acireductone dioxygenase 3 (199 aa).

Residues histidine 99, histidine 101, glutamate 105, and histidine 144 each coordinate Fe(2+). The Ni(2+) site is built by histidine 99, histidine 101, glutamate 105, and histidine 144.

It belongs to the acireductone dioxygenase (ARD) family. The cofactor is Fe(2+). It depends on Ni(2+) as a cofactor.

The protein resides in the cytoplasm. The protein localises to the nucleus. The catalysed reaction is 1,2-dihydroxy-5-(methylsulfanyl)pent-1-en-3-one + O2 = 4-methylsulfanyl-2-oxobutanoate + formate + 2 H(+). The enzyme catalyses 1,2-dihydroxy-5-(methylsulfanyl)pent-1-en-3-one + O2 = 3-(methylsulfanyl)propanoate + CO + formate + 2 H(+). It participates in amino-acid biosynthesis; L-methionine biosynthesis via salvage pathway; L-methionine from S-methyl-5-thio-alpha-D-ribose 1-phosphate: step 5/6. Its function is as follows. Catalyzes 2 different reactions between oxygen and the acireductone 1,2-dihydroxy-3-keto-5-methylthiopentene (DHK-MTPene) depending upon the metal bound in the active site. Fe-containing acireductone dioxygenase (Fe-ARD) produces formate and 2-keto-4-methylthiobutyrate (KMTB), the alpha-ketoacid precursor of methionine in the methionine recycle pathway. Ni-containing acireductone dioxygenase (Ni-ARD) produces methylthiopropionate, carbon monoxide and formate, and does not lie on the methionine recycle pathway. This Arabidopsis thaliana (Mouse-ear cress) protein is Acireductone dioxygenase 3 (ARD3).